The following is a 291-amino-acid chain: Probable protein S-acyltransferase 12 (291 aa).

2 helical membrane-spanning segments follow: residues 14–34 (GYFM…AVVV) and 49–69 (LSAL…MLLW). Positions 111 to 161 (GYCTKCRNVKPPRCHHCSVCQRCVLKMDHHCVWIVNCVGARNYKFFLLFLF) constitute a DHHC domain. The active-site S-palmitoyl cysteine intermediate is Cys141. 2 helical membrane-spanning segments follow: residues 155–175 (FFLL…IVLL) and 198–218 (LVLA…FVVM).

Belongs to the DHHC palmitoyltransferase family.

It localises to the cell membrane. The catalysed reaction is L-cysteinyl-[protein] + hexadecanoyl-CoA = S-hexadecanoyl-L-cysteinyl-[protein] + CoA. Its function is as follows. Palmitoyl acyltransferase. This chain is Probable protein S-acyltransferase 12 (PAT12), found in Arabidopsis thaliana (Mouse-ear cress).